The following is a 258-amino-acid chain: MASTDNSRALTLLPAVDVADGQAVRLVQGAAGTETSYGAPIEAALAWQNAGAEWIHLVDLDAAFGRGSNFELLKEVTGQLDVNVELSGGIRDDESLERALSTGCRRVNIGTAALEDPEWCESVISRYGDKVAIGLDTREVDGEWRLRGRGWTSDGGELWEVLERLDSQGVSRLVVTDVSRDGMLNGPNIDLLREVAAATDAPVVASGGISSLDDIRALAAVVHEGVDSAIVGKALYAGKFTLEEALEAAQGVARGSDI.

Asp17 serves as the catalytic Proton acceptor. The active-site Proton donor is Asp136.

This sequence belongs to the HisA/HisF family.

It is found in the cytoplasm. The enzyme catalyses 1-(5-phospho-beta-D-ribosyl)-5-[(5-phospho-beta-D-ribosylamino)methylideneamino]imidazole-4-carboxamide = 5-[(5-phospho-1-deoxy-D-ribulos-1-ylimino)methylamino]-1-(5-phospho-beta-D-ribosyl)imidazole-4-carboxamide. The protein operates within amino-acid biosynthesis; L-histidine biosynthesis; L-histidine from 5-phospho-alpha-D-ribose 1-diphosphate: step 4/9. In Corynebacterium jeikeium (strain K411), this protein is 1-(5-phosphoribosyl)-5-[(5-phosphoribosylamino)methylideneamino] imidazole-4-carboxamide isomerase.